A 121-amino-acid polypeptide reads, in one-letter code: Small ribosomal subunit protein uS13 (121 aa).

Residues 94-121 are disordered; it reads GLPVRGQNTKNNARTRKGPRRTVANKKK. Positions 106–121 are enriched in basic residues; that stretch reads ARTRKGPRRTVANKKK.

This sequence belongs to the universal ribosomal protein uS13 family. Part of the 30S ribosomal subunit. Forms a loose heterodimer with protein S19. Forms two bridges to the 50S subunit in the 70S ribosome.

In terms of biological role, located at the top of the head of the 30S subunit, it contacts several helices of the 16S rRNA. In the 70S ribosome it contacts the 23S rRNA (bridge B1a) and protein L5 of the 50S subunit (bridge B1b), connecting the 2 subunits; these bridges are implicated in subunit movement. Contacts the tRNAs in the A and P-sites. The chain is Small ribosomal subunit protein uS13 from Anoxybacillus flavithermus (strain DSM 21510 / WK1).